The sequence spans 604 residues: Elongation factor 4 (604 aa).

Residues 7–189 form the tr-type G domain; the sequence is SKIRNFCIIA…SIVHLVPPPS (183 aa). GTP-binding positions include 19–24 and 136–139; these read DHGKST and NKID.

Belongs to the TRAFAC class translation factor GTPase superfamily. Classic translation factor GTPase family. LepA subfamily.

Its subcellular location is the cell inner membrane. It carries out the reaction GTP + H2O = GDP + phosphate + H(+). Functionally, required for accurate and efficient protein synthesis under certain stress conditions. May act as a fidelity factor of the translation reaction, by catalyzing a one-codon backward translocation of tRNAs on improperly translocated ribosomes. Back-translocation proceeds from a post-translocation (POST) complex to a pre-translocation (PRE) complex, thus giving elongation factor G a second chance to translocate the tRNAs correctly. Binds to ribosomes in a GTP-dependent manner. In Synechococcus sp. (strain ATCC 27144 / PCC 6301 / SAUG 1402/1) (Anacystis nidulans), this protein is Elongation factor 4.